A 1758-amino-acid polypeptide reads, in one-letter code: Collagen alpha-2(IV) chain (1758 aa).

The first 26 residues, 1–26 (MKQRAALGPVLRLAILALLAVSYVQS), serve as a signal peptide directing secretion. The 7S domain stretch occupies residues 27-42 (QATCRDCSNRGCFCVG). Positions 42-1527 (GEKGSMGAPG…PGAPGAAGPA (1486 aa)) are triple-helical region. Low complexity predominate over residues 47-62 (MGAPGPQGPPGTQGIR). Disordered stretches follow at residues 47–943 (MGAP…GAPG), 955–1304 (GVPG…GLPG), 1316–1339 (GFPGAKGDLGANGIPGKRGEDGLP), and 1367–1525 (GFPG…GAAG). Positions 102-111 (GNDGGNGRPG) are enriched in gly residues. The segment covering 134 to 149 (PGRPGPPGMPGFPGPP) has biased composition (pro residues). Basic and acidic residues predominate over residues 189 to 198 (YPGEKGDRGD). Residues 224–234 (PKGDPGDLGSV) show a composition bias toward low complexity. Residue Ser248 is glycosylated (O-linked (Xyl...) (glycosaminoglycan) serine). Residues 258-267 (PGEKGDKGEP) are compositionally biased toward basic and acidic residues. Positions 268 to 283 (GEGGQRGYPGNGGLSG) are enriched in gly residues. Residues 367–382 (PGPPGLPGRPGNPGPP) show a composition bias toward pro residues. The span at 398–407 (GNTGGPGLPG) shows a compositional bias: gly residues. Low complexity-rich tracts occupy residues 408–417 (YPGNEGLPGP) and 429–439 (APGVSGPSGIP). A compositionally biased stretch (basic and acidic residues) spans 464 to 479 (KDGKPGLDGAPGRKGE). Low complexity-rich tracts occupy residues 495-509 (GLPGAPGQRGAPGPN) and 568-584 (PVGDAGDDGLPGPAGRP). Residues 638 to 648 (PSGPVGPPGAP) show a composition bias toward pro residues. Gly residues-rich tracts occupy residues 693–702 (GAKGDGGLPG), 737–746 (GTKGEGGYPG), and 782–791 (GDKGFGGVPG). Residues 839–858 (LPGLPGTPGLEGQRGFPGAP) show a composition bias toward low complexity. Residues 859–868 (GLKGGDGLPG) are compositionally biased toward gly residues. The span at 929–938 (APGQSGAPGL) shows a compositional bias: low complexity. Positions 958–967 (GFKGDGGLPG) are enriched in gly residues. Residues 968-980 (LPGLNGPKGEPGV) show a composition bias toward low complexity. Residues 988 to 997 (GMKGNGGLPG) show a composition bias toward gly residues. Residues 1040 to 1056 (LPGQPGLRGPQGPSGLP) are compositionally biased toward low complexity. A compositionally biased stretch (gly residues) spans 1194-1203 (GLPGLGGEKG). The span at 1237–1250 (FPGQPGQEGLPGLS) shows a compositional bias: low complexity. Residues 1251–1260 (GEKGMGGLPG) show a composition bias toward gly residues. A compositionally biased stretch (gly residues) spans 1373-1382 (GLKGEGGLPG). Composition is skewed to low complexity over residues 1413–1425 (LPGRDGLPGADGP) and 1433–1454 (GPQNLVEPGEKGLPGLPGAPGL). 2 stretches are compositionally biased toward gly residues: residues 1492–1501 (GEKGMGGLPG) and 1507–1516 (GQPGGPGAPG). In terms of domain architecture, Collagen IV NC1 spans 1531–1754 (GFVLVKHSQT…SRCQVCVKST (224 aa)). 6 disulfides stabilise this stretch: Cys1546-Cys1635, Cys1579-Cys1632, Cys1591-Cys1597, Cys1654-Cys1750, Cys1688-Cys1747, and Cys1700-Cys1707.

Belongs to the type IV collagen family. As to quaternary structure, trimers of two alpha 1(IV) and one alpha 2(IV) chain. Type IV collagen forms a mesh-like network linked through intermolecular interactions between 7S domains and between NC1 domains. In terms of processing, prolines at the third position of the tripeptide repeating unit (G-X-Y) are hydroxylated in some or all of the chains. Post-translationally, type IV collagens contain numerous cysteine residues which are involved in inter- and intramolecular disulfide bonding. 12 of these, located in the NC1 domain, are conserved in all known type IV collagens. The trimeric structure of the NC1 domains is stabilized by covalent bonds between Lys and Met residues. In terms of tissue distribution, localizes to the basement membrane between distal tip cells and the germline. Localizes to the intestinal basement membrane.

It localises to the secreted. It is found in the extracellular space. The protein localises to the extracellular matrix. Its subcellular location is the basement membrane. In terms of biological role, collagen type IV is specific for basement membranes. Together with fbl-1 and downstream of metalloprotease mig-17, recruits nidogen nid-1 to the gonad basement membrane thereby probably inducing basement membrane remodeling required for the directional migration of distal tip cells. Required to restrict presynaptic growth at the neuromuscular junctions in late larval stage and in adult motor neurons. Vital for embryonic development. The chain is Collagen alpha-2(IV) chain from Caenorhabditis elegans.